Reading from the N-terminus, the 375-residue chain is Ornithine carbamoyltransferase, chloroplastic (375 aa).

Carbamoyl phosphate contacts are provided by residues 123–126 (SMRT), Arg174, His201, and Gln204. The L-ornithine site is built by Asn232, Asp293, Ser297, and Met298. Residue Cys333 is the Proton acceptor of the active site. Residues 333–334 (CL) and Arg361 each bind carbamoyl phosphate.

Belongs to the aspartate/ornithine carbamoyltransferase superfamily. OTCase family. Homotrimer.

Its subcellular location is the plastid. The protein localises to the chloroplast. The catalysed reaction is carbamoyl phosphate + L-ornithine = L-citrulline + phosphate + H(+). The sequence is that of Ornithine carbamoyltransferase, chloroplastic (ARGF) from Pisum sativum (Garden pea).